Consider the following 639-residue polypeptide: Putative oxidoreductase UacF (639 aa).

5 consecutive 4Fe-4S ferredoxin-type domains span residues Lys3–Pro32, Lys47–Ser77, Asp78–Thr107, Gln110–Asp139, and Gln201–Leu235. Residues Cys12, Cys15, Cys18, Cys22, Cys56, Cys59, Cys64, Cys68, Cys87, Cys90, Cys93, Cys97, Cys112, Cys115, Cys125, Cys129, Cys210, Cys213, Cys219, and Cys223 each coordinate [4Fe-4S] cluster.

The cofactor is [4Fe-4S] cluster.

In terms of biological role, involved in formate-dependent uric acid degradation under microaerobic and anaerobic conditions. May reduce the enzymes necessary for uric acid degradation. The polypeptide is Putative oxidoreductase UacF (Escherichia coli (strain K12)).